The sequence spans 903 residues: Dynamin-like GTPase msp1, mitochondrial (903 aa).

Residues methionine 1 to arginine 78 constitute a mitochondrion transit peptide. Residues leucine 86–alanine 103 traverse the membrane as a helical segment. The span at valine 167 to aspartate 188 shows a compositional bias: basic and acidic residues. Residues valine 167–valine 198 are disordered. A helical transmembrane segment spans residues valine 198–valine 214. A Dynamin-type G domain is found at alanine 260 to glutamine 531. A G1 motif region spans residues glycine 270 to serine 277. GTP-binding residues include serine 273, serine 274, glycine 275, lysine 276, serine 277, serine 278, and glycine 292. Serine 277 is a Mg(2+) binding site. A G2 motif region spans residues valine 296 to arginine 298. Mg(2+)-binding residues include threonine 297 and aspartate 370. A G3 motif region spans residues aspartate 370–glycine 373. Residues threonine 438–aspartate 441 are G4 motif. GTP-binding residues include lysine 439, aspartate 441, and serine 468. The G5 motif stretch occupies residues isoleucine 467–isoleucine 470. Positions alanine 691–lysine 805 are paddle region. A disulfide bond links cysteine 802 and cysteine 811. Positions lysine 805–glutamine 898 constitute a GED domain.

The protein belongs to the TRAFAC class dynamin-like GTPase superfamily. Dynamin/Fzo/YdjA family. Homooligomer. Interacts with cdr1. Cleavage of the transit peptide by mitochondrial processing protease (MPP) produces a long integral membrane form of msp1 (l-msp1). Further processing by a rhomboid protease after the transmembrane regions produces a short peripheral membrane form of msp1 (s-msp1). Both isoforms are required for full activity.

The protein localises to the mitochondrion inner membrane. Its subcellular location is the mitochondrion intermembrane space. The catalysed reaction is GTP + H2O = GDP + phosphate + H(+). In terms of biological role, dynamin-related GTPase that is essential for normal mitochondrial morphology by mediating fusion of the mitochondrial inner membranes and maintaining respiratory chain function. Exists in two forms: the transmembrane, long form (Dynamin-like GTPase msp1, long form; l-msp1), which is tethered to the inner mitochondrial membrane, and the short soluble form (Dynamin-like GTPase msp1, short form; s-msp1), which results from proteolytic cleavage and localizes in the intermembrane space. Both forms (l-msp1 and s-msp1) cooperate to catalyze the fusion of the mitochondrial inner membrane. Its role in mitochondrial morphology is required for mitochondrial genome maintenance. Functionally, constitutes the transmembrane long form (l-msp1) that plays a central role in mitochondrial inner membrane fusion. L-msp1 and the soluble short form (s-msp1) form higher-order helical assemblies that coordinate the fusion of mitochondrial inner membranes. Inner membrane-anchored l-msp1 molecules initiate membrane remodeling by recruiting soluble s-msp1 to rapidly polymerize into a flexible cylindrical scaffold encaging the mitochondrial inner membrane. Once at the membrane surface, the formation of s-msp1 helices induce bilayer curvature. Msp1 dimerization through the paddle region, which inserts into cardiolipin-containing membrane, promotes GTP hydrolysis and the helical assembly of a flexible msp1 lattice on the membrane, which drives membrane curvature and mitochondrial fusion. Its function is as follows. Constitutes the soluble short form (s-msp1) generated by cleavage, which plays a central role in mitochondrial inner membrane fusion. The transmembrane long form (l-msp1) and the s-msp1 form higher-order helical assemblies that coordinate the fusion of mitochondrial inner membranes. Inner membrane-anchored l-msp1 molecules initiate membrane remodeling by recruiting soluble s-msp1 to rapidly polymerize into a flexible cylindrical scaffold encaging the mitochondrial inner membrane. Once at the membrane surface, the formation of s-msp1 helices induce bilayer curvature. Msp1 dimerization through the paddle region, which inserts into cardiolipin-containing membrane, promotes GTP hydrolysis and the helical assembly of a flexible msp1 lattice on the membrane, which drives membrane curvature and mitochondrial fusion. The polypeptide is Dynamin-like GTPase msp1, mitochondrial (Schizosaccharomyces pombe (strain 972 / ATCC 24843) (Fission yeast)).